Here is a 341-residue protein sequence, read N- to C-terminus: Methionine import ATP-binding protein MetN 3 (341 aa).

The ABC transporter domain maps to Ile-2 to Val-241. Gly-38 to Ser-45 provides a ligand contact to ATP.

It belongs to the ABC transporter superfamily. Methionine importer (TC 3.A.1.24) family. The complex is composed of two ATP-binding proteins (MetN), two transmembrane proteins (MetI) and a solute-binding protein (MetQ).

The protein localises to the cell membrane. The enzyme catalyses L-methionine(out) + ATP + H2O = L-methionine(in) + ADP + phosphate + H(+). It carries out the reaction D-methionine(out) + ATP + H2O = D-methionine(in) + ADP + phosphate + H(+). Part of the ABC transporter complex MetNIQ involved in methionine import. Responsible for energy coupling to the transport system. The protein is Methionine import ATP-binding protein MetN 3 of Bacillus cereus (strain ATCC 10987 / NRS 248).